Reading from the N-terminus, the 207-residue chain is Small ribosomal subunit protein uS4c (207 aa).

The S4 RNA-binding domain maps to 92-150 (MRLDNILFRLGFVPTIPSARQLINHRHILVNNRIVDVPSFHCKPKDIITIGSPKTYQSI).

This sequence belongs to the universal ribosomal protein uS4 family. In terms of assembly, part of the 30S ribosomal subunit. Contacts protein S5. The interaction surface between S4 and S5 is involved in control of translational fidelity.

It localises to the plastid. It is found in the chloroplast. One of the primary rRNA binding proteins, it binds directly to 16S rRNA where it nucleates assembly of the body of the 30S subunit. In terms of biological role, with S5 and S12 plays an important role in translational accuracy. This is Small ribosomal subunit protein uS4c (rps4) from Equisetum variegatum (Variegated horsetail).